Here is a 604-residue protein sequence, read N- to C-terminus: Glucoamylase 1 (604 aa).

Residues methionine 1–alanine 25 form the signal peptide. The interval alanine 26 to glycine 115 is adsorption to raw starch. Residues alanine 26–serine 130 form the CBM21 domain. The segment at lysine 116–alanine 604 is starch degradation. A glycan (N-linked (GlcNAc...) asparagine) is linked at asparagine 122. Residues tyrosine 127 to proline 164 form a disordered region. A compositionally biased stretch (low complexity) spans serine 130–threonine 162. N-linked (GlcNAc...) asparagine glycans are attached at residues asparagine 167, asparagine 230, and asparagine 236. Tryptophan 279 serves as a coordination point for substrate. Catalysis depends on aspartate 336, which acts as the Proton acceptor. The Proton donor role is filled by glutamate 339. Asparagine 564 is a glycosylation site (N-linked (GlcNAc...) asparagine).

Belongs to the glycosyl hydrolase 15 family.

It catalyses the reaction Hydrolysis of terminal (1-&gt;4)-linked alpha-D-glucose residues successively from non-reducing ends of the chains with release of beta-D-glucose.. The protein is Glucoamylase 1 of Rhizopus oryzae (Mucormycosis agent).